The chain runs to 164 residues: Phosphopantetheine adenylyltransferase (164 aa).

T10 is a substrate binding site. Residues 10–11 (TF) and H18 each bind ATP. K42, L74, and R88 together coordinate substrate. ATP contacts are provided by residues 89–91 (GIR), E99, and 124–130 (YAFVSST).

Belongs to the bacterial CoaD family. Homohexamer. Requires Mg(2+) as cofactor.

The protein localises to the cytoplasm. The catalysed reaction is (R)-4'-phosphopantetheine + ATP + H(+) = 3'-dephospho-CoA + diphosphate. The protein operates within cofactor biosynthesis; coenzyme A biosynthesis; CoA from (R)-pantothenate: step 4/5. Reversibly transfers an adenylyl group from ATP to 4'-phosphopantetheine, yielding dephospho-CoA (dPCoA) and pyrophosphate. The sequence is that of Phosphopantetheine adenylyltransferase from Tolumonas auensis (strain DSM 9187 / NBRC 110442 / TA 4).